The sequence spans 278 residues: Bis(5'-nucleosyl)-tetraphosphatase, symmetrical (278 aa).

This sequence belongs to the Ap4A hydrolase family.

It carries out the reaction P(1),P(4)-bis(5'-adenosyl) tetraphosphate + H2O = 2 ADP + 2 H(+). In terms of biological role, hydrolyzes diadenosine 5',5'''-P1,P4-tetraphosphate to yield ADP. The sequence is that of Bis(5'-nucleosyl)-tetraphosphatase, symmetrical from Nitrosococcus oceani (strain ATCC 19707 / BCRC 17464 / JCM 30415 / NCIMB 11848 / C-107).